A 130-amino-acid chain; its full sequence is Small ribosomal subunit protein uS8 (130 aa).

The protein belongs to the universal ribosomal protein uS8 family. Part of the 30S ribosomal subunit. Contacts proteins S5 and S12.

Functionally, one of the primary rRNA binding proteins, it binds directly to 16S rRNA central domain where it helps coordinate assembly of the platform of the 30S subunit. In Shigella boydii serotype 18 (strain CDC 3083-94 / BS512), this protein is Small ribosomal subunit protein uS8.